Consider the following 583-residue polypeptide: Potassium-transporting ATPase potassium-binding subunit (583 aa).

Helical transmembrane passes span 3–23 (NIIW…WPLG), 66–86 (MACV…LLMA), 135–155 (GLTV…FALI), 177–197 (VLYI…EQGV), 266–286 (LEML…GAKI), 293–313 (VAIF…TVQA), 402–422 (GLYG…LMVG), 440–460 (AVVV…LMCL), 506–526 (VLLG…ILAM), and 549–569 (LFIF…FFPA).

Belongs to the KdpA family. In terms of assembly, the system is composed of three essential subunits: KdpA, KdpB and KdpC.

The protein resides in the cell inner membrane. Functionally, part of the high-affinity ATP-driven potassium transport (or Kdp) system, which catalyzes the hydrolysis of ATP coupled with the electrogenic transport of potassium into the cytoplasm. This subunit binds the periplasmic potassium ions and delivers the ions to the membrane domain of KdpB through an intramembrane tunnel. The polypeptide is Potassium-transporting ATPase potassium-binding subunit (Desulfovibrio desulfuricans (strain ATCC 27774 / DSM 6949 / MB)).